The primary structure comprises 309 residues: Probable 3-hydroxyacyl-CoA dehydrogenase B0272.3 (309 aa).

It belongs to the 3-hydroxyacyl-CoA dehydrogenase family. As to quaternary structure, homodimer.

The protein localises to the mitochondrion matrix. It carries out the reaction a (3S)-3-hydroxyacyl-CoA + NAD(+) = a 3-oxoacyl-CoA + NADH + H(+). Its pathway is lipid metabolism; fatty acid beta-oxidation. This is Probable 3-hydroxyacyl-CoA dehydrogenase B0272.3 from Caenorhabditis elegans.